We begin with the raw amino-acid sequence, 111 residues long: Large ribosomal subunit protein P1 (111 aa).

Residues 65 to 89 (SGAGSGPAPAAAAAAPAAGGAAPAA) show a composition bias toward low complexity. The interval 65–111 (SGAGSGPAPAAAAAAPAAGGAAPAAETKKKEEPKEESDDDMGFGLFD) is disordered.

The protein belongs to the eukaryotic ribosomal protein P1/P2 family. In terms of assembly, P1 and P2 exist as dimers at the large ribosomal subunit.

Plays an important role in the elongation step of protein synthesis. The chain is Large ribosomal subunit protein P1 from Caenorhabditis elegans.